A 266-amino-acid chain; its full sequence is MQTDNTKSNTNKTAKQEWGSFAFVICIALLIRILIMEPFTVPTGSMKATILENDYIFSTKYSYGYSNYSLSFFDFIPLFKGRIFAREPERGDIVVFRPPNDMNVRYIKRLIGLPGDKIQLIDDVIYINDKKIERTEVGTYISEEGIKYLKFKETLPNGRTYFSYKLAPIFGVIYNDRYGNTDVFYVPEGKYFFLGDNRDQSNDSRVNLGFVPFENFIAKAQFIWLSTKITWWDNDIGVINLVLKLKPWIESVRLNRIFRNLYSTDE.

Topologically, residues 1–20 (MQTDNTKSNTNKTAKQEWGS) are cytoplasmic. A helical transmembrane segment spans residues 21-41 (FAFVICIALLIRILIMEPFTV). Residues 42 to 266 (PTGSMKATIL…IFRNLYSTDE (225 aa)) lie on the Periplasmic side of the membrane. Active-site residues include serine 45 and lysine 108.

Belongs to the peptidase S26 family.

The protein resides in the cell inner membrane. It catalyses the reaction Cleavage of hydrophobic, N-terminal signal or leader sequences from secreted and periplasmic proteins.. This is Signal peptidase I (lepB) from Rickettsia felis (strain ATCC VR-1525 / URRWXCal2) (Rickettsia azadi).